We begin with the raw amino-acid sequence, 156 residues long: Small ribosomal subunit protein uS7 (156 aa).

This sequence belongs to the universal ribosomal protein uS7 family. As to quaternary structure, part of the 30S ribosomal subunit. Contacts proteins S9 and S11.

In terms of biological role, one of the primary rRNA binding proteins, it binds directly to 16S rRNA where it nucleates assembly of the head domain of the 30S subunit. Is located at the subunit interface close to the decoding center, probably blocks exit of the E-site tRNA. The sequence is that of Small ribosomal subunit protein uS7 from Deinococcus geothermalis (strain DSM 11300 / CIP 105573 / AG-3a).